We begin with the raw amino-acid sequence, 260 residues long: 1-(5-phosphoribosyl)-5-[(5-phosphoribosylamino)methylideneamino] imidazole-4-carboxamide isomerase (260 aa).

The active-site Proton acceptor is the Asp-8. Asp-130 (proton donor) is an active-site residue.

This sequence belongs to the HisA/HisF family.

It localises to the cytoplasm. It catalyses the reaction 1-(5-phospho-beta-D-ribosyl)-5-[(5-phospho-beta-D-ribosylamino)methylideneamino]imidazole-4-carboxamide = 5-[(5-phospho-1-deoxy-D-ribulos-1-ylimino)methylamino]-1-(5-phospho-beta-D-ribosyl)imidazole-4-carboxamide. The protein operates within amino-acid biosynthesis; L-histidine biosynthesis; L-histidine from 5-phospho-alpha-D-ribose 1-diphosphate: step 4/9. This is 1-(5-phosphoribosyl)-5-[(5-phosphoribosylamino)methylideneamino] imidazole-4-carboxamide isomerase from Chlorobaculum tepidum (strain ATCC 49652 / DSM 12025 / NBRC 103806 / TLS) (Chlorobium tepidum).